A 439-amino-acid chain; its full sequence is Homogentisate 1,2-dioxygenase (439 aa).

The Proton acceptor role is filled by histidine 293. Fe cation contacts are provided by histidine 336 and glutamate 342. The homogentisate site is built by tyrosine 351 and histidine 372. Histidine 372 contacts Fe cation.

It belongs to the homogentisate dioxygenase family. As to quaternary structure, hexamer; dimer of trimers. Fe cation is required as a cofactor.

It carries out the reaction homogentisate + O2 = 4-maleylacetoacetate + H(+). The protein operates within amino-acid degradation; L-phenylalanine degradation; acetoacetate and fumarate from L-phenylalanine: step 4/6. Functionally, involved in the catabolism of homogentisate (2,5-dihydroxyphenylacetate or 2,5-OH-PhAc), a central intermediate in the degradation of phenylalanine and tyrosine. Catalyzes the oxidative ring cleavage of the aromatic ring of homogentisate to yield maleylacetoacetate. This Cupriavidus pinatubonensis (strain JMP 134 / LMG 1197) (Cupriavidus necator (strain JMP 134)) protein is Homogentisate 1,2-dioxygenase.